Here is a 461-residue protein sequence, read N- to C-terminus: Metacaspase-1 (461 aa).

4 stretches are compositionally biased toward gly residues: residues 1-21 (MSYP…GYGG), 45-66 (QYGG…GYGP), 74-86 (QYGG…GYGP), and 105-119 (PGGQ…GHPG). Residues 1 to 154 (MSYPGQGGNT…PQGNQAFGGT (154 aa)) are disordered. Low complexity-rich tracts occupy residues 121 to 131 (GNQAPPGQYGQ) and 138 to 148 (HGNHNMPPQGN). Residues His-252 and Cys-308 contribute to the active site.

Belongs to the peptidase C14B family.

Involved in cell death (apoptosis). This chain is Metacaspase-1 (MCA1), found in Yarrowia lipolytica (strain CLIB 122 / E 150) (Yeast).